Reading from the N-terminus, the 385-residue chain is Cytochrome b (385 aa).

A run of 4 helical transmembrane segments spans residues 32 to 52 (FGSL…TLAM), 76 to 98 (WLIR…LHIG), 113 to 133 (AWIL…LGYV), and 179 to 199 (FFAL…MHLI). The heme b site is built by His-82 and His-96. Residues His-183 and His-197 each contribute to the heme b site. An a ubiquinone-binding site is contributed by His-202. The next 4 helical transmembrane spans lie at 226–246 (YLFK…IFVF), 290–310 (LLGV…PKTD), 322–342 (LSKI…QLGA), and 349–369 (FIEF…IIMP).

Belongs to the cytochrome b family. In terms of assembly, fungal cytochrome b-c1 complex contains 10 subunits; 3 respiratory subunits, 2 core proteins and 5 low-molecular weight proteins. Cytochrome b-c1 complex is a homodimer. It depends on heme b as a cofactor.

Its subcellular location is the mitochondrion inner membrane. Its function is as follows. Component of the ubiquinol-cytochrome c reductase complex (complex III or cytochrome b-c1 complex) that is part of the mitochondrial respiratory chain. The b-c1 complex mediates electron transfer from ubiquinol to cytochrome c. Contributes to the generation of a proton gradient across the mitochondrial membrane that is then used for ATP synthesis. The chain is Cytochrome b (cob) from Akanthomyces muscarius (Entomopathogenic fungus).